The following is a 507-amino-acid chain: Histidine ammonia-lyase (507 aa).

The segment at residues 141 to 143 is a cross-link (5-imidazolinone (Ala-Gly)); that stretch reads ASG. 2,3-didehydroalanine (Ser) is present on S142.

The protein belongs to the PAL/histidase family. Contains an active site 4-methylidene-imidazol-5-one (MIO), which is formed autocatalytically by cyclization and dehydration of residues Ala-Ser-Gly.

The protein localises to the cytoplasm. The catalysed reaction is L-histidine = trans-urocanate + NH4(+). It functions in the pathway amino-acid degradation; L-histidine degradation into L-glutamate; N-formimidoyl-L-glutamate from L-histidine: step 1/3. The protein is Histidine ammonia-lyase of Cereibacter sphaeroides (strain ATCC 17023 / DSM 158 / JCM 6121 / CCUG 31486 / LMG 2827 / NBRC 12203 / NCIMB 8253 / ATH 2.4.1.) (Rhodobacter sphaeroides).